The following is a 338-amino-acid chain: F420-dependent glucose-6-phosphate dehydrogenase (338 aa).

Coenzyme F420-(gamma-Glu)n is bound at residue D40. H41 serves as the catalytic Proton donor. Coenzyme F420-(gamma-Glu)n-binding positions include T77 and 108–109 (TG). E110 serves as the catalytic Proton acceptor. Coenzyme F420-(gamma-Glu)n-binding positions include N113, 178–179 (GG), and 181–182 (VV). T196, K199, K260, and R284 together coordinate substrate.

It belongs to the F420-dependent glucose-6-phosphate dehydrogenase family. In terms of assembly, homodimer.

The catalysed reaction is oxidized coenzyme F420-(gamma-L-Glu)(n) + D-glucose 6-phosphate + H(+) = 6-phospho-D-glucono-1,5-lactone + reduced coenzyme F420-(gamma-L-Glu)(n). Functionally, catalyzes the coenzyme F420-dependent oxidation of glucose 6-phosphate (G6P) to 6-phosphogluconolactone. The protein is F420-dependent glucose-6-phosphate dehydrogenase of Gordonia bronchialis (strain ATCC 25592 / DSM 43247 / BCRC 13721 / JCM 3198 / KCTC 3076 / NBRC 16047 / NCTC 10667) (Rhodococcus bronchialis).